Consider the following 448-residue polypeptide: Chromosomal replication initiator protein DnaA (448 aa).

Positions 1-73 are domain I, interacts with DnaA modulators; the sequence is MNTHLTETWE…VNALKLLTSK (73 aa). The tract at residues 73–109 is domain II; that stretch reads KKYNIDFIVTTEEKIEENQKNHNNEKSNIVVNDEMST. The tract at residues 110–326 is domain III, AAA+ region; sequence MLNPKYTFDS…GALIRIVAFS (217 aa). ATP-binding residues include Gly-154, Gly-156, Lys-157, and Thr-158. Residues 327–448 form a domain IV, binds dsDNA region; that stretch reads SLTNKEISID…KELNKRINQK (122 aa).

It belongs to the DnaA family. In terms of assembly, oligomerizes as a right-handed, spiral filament on DNA at oriC.

The protein localises to the cytoplasm. Plays an essential role in the initiation and regulation of chromosomal replication. ATP-DnaA binds to the origin of replication (oriC) to initiate formation of the DNA replication initiation complex once per cell cycle. Binds the DnaA box (a 9 base pair repeat at the origin) and separates the double-stranded (ds)DNA. Forms a right-handed helical filament on oriC DNA; dsDNA binds to the exterior of the filament while single-stranded (ss)DNA is stabiized in the filament's interior. The ATP-DnaA-oriC complex binds and stabilizes one strand of the AT-rich DNA unwinding element (DUE), permitting loading of DNA polymerase. After initiation quickly degrades to an ADP-DnaA complex that is not apt for DNA replication. Binds acidic phospholipids. The chain is Chromosomal replication initiator protein DnaA from Clostridium botulinum (strain ATCC 19397 / Type A).